The chain runs to 232 residues: RNA chaperone ProQ (232 aa).

Positions 105 to 182 (EAKARVQAQR…REEQHTPVSD (78 aa)) are disordered. Over residues 117–136 (QQAKKREAAAAAGEKEDAPR) the composition is skewed to basic and acidic residues. The span at 137 to 146 (RERKPRPTTP) shows a compositional bias: basic residues. Residues 147–177 (RRKEGAERKPRAQKPVEKAPKTVKAPREEQH) are compositionally biased toward basic and acidic residues.

This sequence belongs to the ProQ family.

It localises to the cytoplasm. RNA chaperone with significant RNA binding, RNA strand exchange and RNA duplexing activities. May regulate ProP activity through an RNA-based, post-transcriptional mechanism. This Shigella boydii serotype 18 (strain CDC 3083-94 / BS512) protein is RNA chaperone ProQ.